The primary structure comprises 386 residues: Succinate--CoA ligase [ADP-forming] subunit beta (386 aa).

In terms of domain architecture, ATP-grasp spans 9-244 (KEILRKYGVS…LDEEDPKEIE (236 aa)). ATP is bound by residues K46, 53–55 (GRG), E99, C102, and E107. Positions 199 and 213 each coordinate Mg(2+). Substrate contacts are provided by residues N264 and 321–323 (GIM).

It belongs to the succinate/malate CoA ligase beta subunit family. Heterotetramer of two alpha and two beta subunits. Requires Mg(2+) as cofactor.

The enzyme catalyses succinate + ATP + CoA = succinyl-CoA + ADP + phosphate. The catalysed reaction is GTP + succinate + CoA = succinyl-CoA + GDP + phosphate. It functions in the pathway carbohydrate metabolism; tricarboxylic acid cycle; succinate from succinyl-CoA (ligase route): step 1/1. Succinyl-CoA synthetase functions in the citric acid cycle (TCA), coupling the hydrolysis of succinyl-CoA to the synthesis of either ATP or GTP and thus represents the only step of substrate-level phosphorylation in the TCA. The beta subunit provides nucleotide specificity of the enzyme and binds the substrate succinate, while the binding sites for coenzyme A and phosphate are found in the alpha subunit. This Bacillus pumilus (strain SAFR-032) protein is Succinate--CoA ligase [ADP-forming] subunit beta.